The sequence spans 86 residues: Progonadoliberin IIA (86 aa).

Positions Met-1 to Ser-24 are cleaved as a signal peptide. Gln-25 bears the Pyrrolidone carboxylic acid mark. At Gly-34 the chain carries Glycine amide.

Belongs to the GnRH family. Olfactory bulbs, hypothalamus and telencephalon, midbrain and posterior brain areas.

The protein resides in the secreted. Stimulates the secretion of gonadotropins. In Carassius auratus (Goldfish), this protein is Progonadoliberin IIA (gnrh2a).